The chain runs to 215 residues: Phosphatidylserine decarboxylase proenzyme (215 aa).

S184 (schiff-base intermediate with substrate; via pyruvic acid) is an active-site residue. S184 is subject to Pyruvic acid (Ser); by autocatalysis.

This sequence belongs to the phosphatidylserine decarboxylase family. PSD-A subfamily. As to quaternary structure, heterodimer of a large membrane-associated beta subunit and a small pyruvoyl-containing alpha subunit. The cofactor is pyruvate. In terms of processing, is synthesized initially as an inactive proenzyme. Formation of the active enzyme involves a self-maturation process in which the active site pyruvoyl group is generated from an internal serine residue via an autocatalytic post-translational modification. Two non-identical subunits are generated from the proenzyme in this reaction, and the pyruvate is formed at the N-terminus of the alpha chain, which is derived from the carboxyl end of the proenzyme. The post-translation cleavage follows an unusual pathway, termed non-hydrolytic serinolysis, in which the side chain hydroxyl group of the serine supplies its oxygen atom to form the C-terminus of the beta chain, while the remainder of the serine residue undergoes an oxidative deamination to produce ammonia and the pyruvoyl prosthetic group on the alpha chain.

It localises to the cell membrane. The catalysed reaction is a 1,2-diacyl-sn-glycero-3-phospho-L-serine + H(+) = a 1,2-diacyl-sn-glycero-3-phosphoethanolamine + CO2. Its pathway is phospholipid metabolism; phosphatidylethanolamine biosynthesis; phosphatidylethanolamine from CDP-diacylglycerol: step 2/2. Functionally, catalyzes the formation of phosphatidylethanolamine (PtdEtn) from phosphatidylserine (PtdSer). The protein is Phosphatidylserine decarboxylase proenzyme of Ralstonia nicotianae (strain ATCC BAA-1114 / GMI1000) (Ralstonia solanacearum).